Consider the following 284-residue polypeptide: NH(3)-dependent NAD(+) synthetase (284 aa).

41–48 (GLSGGVDS) serves as a coordination point for ATP. Aspartate 47 provides a ligand contact to Mg(2+). Arginine 127 contributes to the deamido-NAD(+) binding site. Threonine 147 is an ATP binding site. Residue glutamate 152 coordinates Mg(2+). Aspartate 167 contributes to the deamido-NAD(+) binding site. ATP is bound by residues lysine 176 and serine 199. Positions 264 to 284 (FKRRPAPGLDLPEPEDPAMSG) are disordered. The segment covering 275-284 (PEPEDPAMSG) has biased composition (acidic residues).

The protein belongs to the NAD synthetase family. In terms of assembly, homodimer.

It carries out the reaction deamido-NAD(+) + NH4(+) + ATP = AMP + diphosphate + NAD(+) + H(+). It participates in cofactor biosynthesis; NAD(+) biosynthesis; NAD(+) from deamido-NAD(+) (ammonia route): step 1/1. In terms of biological role, catalyzes the ATP-dependent amidation of deamido-NAD to form NAD. Uses ammonia as a nitrogen source. This is NH(3)-dependent NAD(+) synthetase from Methanopyrus kandleri (strain AV19 / DSM 6324 / JCM 9639 / NBRC 100938).